The sequence spans 319 residues: tRNA uridine(34) hydroxylase (319 aa).

One can recognise a Rhodanese domain in the interval 127–221 (KQEDTVIIDA…YGKDPEVQGE (95 aa)). Cys-181 functions as the Cysteine persulfide intermediate in the catalytic mechanism.

This sequence belongs to the TrhO family.

The catalysed reaction is uridine(34) in tRNA + AH2 + O2 = 5-hydroxyuridine(34) in tRNA + A + H2O. In terms of biological role, catalyzes oxygen-dependent 5-hydroxyuridine (ho5U) modification at position 34 in tRNAs. The chain is tRNA uridine(34) hydroxylase from Bacillus cereus (strain B4264).